The following is a 260-amino-acid chain: 3-methyl-2-oxobutanoate hydroxymethyltransferase (260 aa).

Residues aspartate 42 and aspartate 81 each contribute to the Mg(2+) site. 3-methyl-2-oxobutanoate-binding positions include 42–43 (DS), aspartate 81, and lysine 109. Glutamate 111 lines the Mg(2+) pocket. The Proton acceptor role is filled by glutamate 178.

It belongs to the PanB family. Homodecamer; pentamer of dimers. Requires Mg(2+) as cofactor.

The protein localises to the cytoplasm. The enzyme catalyses 3-methyl-2-oxobutanoate + (6R)-5,10-methylene-5,6,7,8-tetrahydrofolate + H2O = 2-dehydropantoate + (6S)-5,6,7,8-tetrahydrofolate. The protein operates within cofactor biosynthesis; (R)-pantothenate biosynthesis; (R)-pantoate from 3-methyl-2-oxobutanoate: step 1/2. In terms of biological role, catalyzes the reversible reaction in which hydroxymethyl group from 5,10-methylenetetrahydrofolate is transferred onto alpha-ketoisovalerate to form ketopantoate. The protein is 3-methyl-2-oxobutanoate hydroxymethyltransferase of Ruthia magnifica subsp. Calyptogena magnifica.